Here is a 200-residue protein sequence, read N- to C-terminus: dITP/XTP pyrophosphatase (200 aa).

16–21 (SNNDGK) contributes to the substrate binding site. Mg(2+) is bound by residues glutamate 46 and aspartate 75. Aspartate 75 serves as the catalytic Proton acceptor. Substrate-binding positions include serine 76, 154–157 (FGYD), lysine 177, and 182–183 (HR).

This sequence belongs to the HAM1 NTPase family. In terms of assembly, homodimer. It depends on Mg(2+) as a cofactor.

It carries out the reaction XTP + H2O = XMP + diphosphate + H(+). The enzyme catalyses dITP + H2O = dIMP + diphosphate + H(+). The catalysed reaction is ITP + H2O = IMP + diphosphate + H(+). Its function is as follows. Pyrophosphatase that catalyzes the hydrolysis of nucleoside triphosphates to their monophosphate derivatives, with a high preference for the non-canonical purine nucleotides XTP (xanthosine triphosphate), dITP (deoxyinosine triphosphate) and ITP. Seems to function as a house-cleaning enzyme that removes non-canonical purine nucleotides from the nucleotide pool, thus preventing their incorporation into DNA/RNA and avoiding chromosomal lesions. The protein is dITP/XTP pyrophosphatase of Prochlorococcus marinus (strain SARG / CCMP1375 / SS120).